Reading from the N-terminus, the 440-residue chain is UDP-N-acetylmuramoylalanine--D-glutamate ligase (440 aa).

An ATP-binding site is contributed by 113–119 (GTNGKST).

Belongs to the MurCDEF family.

The protein localises to the cytoplasm. It carries out the reaction UDP-N-acetyl-alpha-D-muramoyl-L-alanine + D-glutamate + ATP = UDP-N-acetyl-alpha-D-muramoyl-L-alanyl-D-glutamate + ADP + phosphate + H(+). The protein operates within cell wall biogenesis; peptidoglycan biosynthesis. Cell wall formation. Catalyzes the addition of glutamate to the nucleotide precursor UDP-N-acetylmuramoyl-L-alanine (UMA). The polypeptide is UDP-N-acetylmuramoylalanine--D-glutamate ligase (Buchnera aphidicola subsp. Acyrthosiphon pisum (strain Tuc7)).